The primary structure comprises 552 residues: Dihydroxy-acid dehydratase (552 aa).

Residue aspartate 78 coordinates Mg(2+). Position 119 (cysteine 119) interacts with [2Fe-2S] cluster. Mg(2+)-binding residues include aspartate 120 and lysine 121. The residue at position 121 (lysine 121) is an N6-carboxylysine. Cysteine 190 contributes to the [2Fe-2S] cluster binding site. Glutamate 441 contacts Mg(2+). Serine 467 functions as the Proton acceptor in the catalytic mechanism.

The protein belongs to the IlvD/Edd family. In terms of assembly, homodimer. Requires [2Fe-2S] cluster as cofactor. Mg(2+) serves as cofactor.

The catalysed reaction is (2R)-2,3-dihydroxy-3-methylbutanoate = 3-methyl-2-oxobutanoate + H2O. It catalyses the reaction (2R,3R)-2,3-dihydroxy-3-methylpentanoate = (S)-3-methyl-2-oxopentanoate + H2O. The protein operates within amino-acid biosynthesis; L-isoleucine biosynthesis; L-isoleucine from 2-oxobutanoate: step 3/4. It functions in the pathway amino-acid biosynthesis; L-valine biosynthesis; L-valine from pyruvate: step 3/4. Functionally, functions in the biosynthesis of branched-chain amino acids. Catalyzes the dehydration of (2R,3R)-2,3-dihydroxy-3-methylpentanoate (2,3-dihydroxy-3-methylvalerate) into 2-oxo-3-methylpentanoate (2-oxo-3-methylvalerate) and of (2R)-2,3-dihydroxy-3-methylbutanoate (2,3-dihydroxyisovalerate) into 2-oxo-3-methylbutanoate (2-oxoisovalerate), the penultimate precursor to L-isoleucine and L-valine, respectively. The protein is Dihydroxy-acid dehydratase of Ignicoccus hospitalis (strain KIN4/I / DSM 18386 / JCM 14125).